The primary structure comprises 114 residues: Large ribosomal subunit protein uL22 (114 aa).

Belongs to the universal ribosomal protein uL22 family. Part of the 50S ribosomal subunit.

In terms of biological role, this protein binds specifically to 23S rRNA; its binding is stimulated by other ribosomal proteins, e.g. L4, L17, and L20. It is important during the early stages of 50S assembly. It makes multiple contacts with different domains of the 23S rRNA in the assembled 50S subunit and ribosome. Functionally, the globular domain of the protein is located near the polypeptide exit tunnel on the outside of the subunit, while an extended beta-hairpin is found that lines the wall of the exit tunnel in the center of the 70S ribosome. The polypeptide is Large ribosomal subunit protein uL22 (Aeromonas hydrophila subsp. hydrophila (strain ATCC 7966 / DSM 30187 / BCRC 13018 / CCUG 14551 / JCM 1027 / KCTC 2358 / NCIMB 9240 / NCTC 8049)).